A 712-amino-acid chain; its full sequence is tRNA 5-methylaminomethyl-2-thiouridine biosynthesis bifunctional protein MnmC (712 aa).

The interval 1–268 is tRNA (mnm(5)s(2)U34)-methyltransferase; it reads MPNMRHRVNS…RRALRHAQSD (268 aa). Residues 292 to 712 form an FAD-dependent cmnm(5)s(2)U34 oxidoreductase region; it reads IGGGVASTHL…MRKLIKGKAL (421 aa).

It in the N-terminal section; belongs to the methyltransferase superfamily. tRNA (mnm(5)s(2)U34)-methyltransferase family. The protein in the C-terminal section; belongs to the DAO family. Requires FAD as cofactor.

It localises to the cytoplasm. It catalyses the reaction 5-aminomethyl-2-thiouridine(34) in tRNA + S-adenosyl-L-methionine = 5-methylaminomethyl-2-thiouridine(34) in tRNA + S-adenosyl-L-homocysteine + H(+). In terms of biological role, catalyzes the last two steps in the biosynthesis of 5-methylaminomethyl-2-thiouridine (mnm(5)s(2)U) at the wobble position (U34) in tRNA. Catalyzes the FAD-dependent demodification of cmnm(5)s(2)U34 to nm(5)s(2)U34, followed by the transfer of a methyl group from S-adenosyl-L-methionine to nm(5)s(2)U34, to form mnm(5)s(2)U34. In Shewanella sediminis (strain HAW-EB3), this protein is tRNA 5-methylaminomethyl-2-thiouridine biosynthesis bifunctional protein MnmC.